The sequence spans 415 residues: Alpha-N-acetylgalactosaminidase (415 aa).

The first 17 residues, 1–17 (MLQKTVLLLALVAQVLM), serve as a signal peptide directing secretion. 3 disulfide bridges follow: C38–C80, C42–C49, and C127–C158. Substrate-binding positions include 78 to 79 (DD) and K154. The active-site Nucleophile is D156. Residue N177 is glycosylated (N-linked (GlcNAc...) asparagine). C187 and C209 are disulfide-bonded. S188 lines the substrate pocket. N-linked (GlcNAc...) asparagine glycosylation is present at N201. Substrate is bound by residues R213 and D217. The Proton donor role is filled by D217. Residues S322 and S332 each carry the phosphoserine modification. N385 is a glycosylation site (N-linked (GlcNAc...) asparagine).

Belongs to the glycosyl hydrolase 27 family. In terms of assembly, homodimer.

Its subcellular location is the lysosome. The enzyme catalyses Cleavage of non-reducing alpha-(1-&gt;3)-N-acetylgalactosamine residues from human blood group A and AB mucin glycoproteins, Forssman hapten and blood group A lacto series glycolipids.. The catalysed reaction is a neolactoside IV(3)-alpha-GalNAc,IV(2)-alpha-Fuc-nLc4Cer(d18:1(4E)) + H2O = a neolactoside IV(2)-alpha-Fuc-nLc4Cer(d18:1(4E)) + N-acetyl-alpha-D-galactosamine. It carries out the reaction a neolactoside IV(3)-alpha-GalNAc,IV(2)-alpha-Fuc-nLc4Cer(d18:0) + H2O = a neolactoside IV(2)-alpha-Fuc-nLc4Cer(d18:0) + N-acetyl-alpha-D-galactosamine. It catalyses the reaction a globoside IV3GalNAc-Gb4Cer + H2O = N-acetyl-alpha-D-galactosamine + a globoside Gb4Cer. Its function is as follows. Removes terminal alpha-N-acetylgalactosamine residues from glycolipids and glycopeptides. Required for the breakdown of glycolipids. This chain is Alpha-N-acetylgalactosaminidase (Naga), found in Mus musculus (Mouse).